The chain runs to 417 residues: Valine--pyruvate aminotransferase (417 aa).

Lys249 carries the N6-(pyridoxal phosphate)lysine modification.

It belongs to the class-I pyridoxal-phosphate-dependent aminotransferase family. As to quaternary structure, homodimer. Requires pyridoxal 5'-phosphate as cofactor.

It localises to the cytoplasm. The enzyme catalyses L-valine + pyruvate = 3-methyl-2-oxobutanoate + L-alanine. In terms of biological role, involved in the biosynthesis of alanine. In Escherichia coli (strain K12), this protein is Valine--pyruvate aminotransferase (avtA).